A 355-amino-acid chain; its full sequence is Protein RecA (355 aa).

67-74 (GPESSGKT) provides a ligand contact to ATP.

It belongs to the RecA family.

Its subcellular location is the cytoplasm. Its function is as follows. Can catalyze the hydrolysis of ATP in the presence of single-stranded DNA, the ATP-dependent uptake of single-stranded DNA by duplex DNA, and the ATP-dependent hybridization of homologous single-stranded DNAs. It interacts with LexA causing its activation and leading to its autocatalytic cleavage. The chain is Protein RecA from Proteus mirabilis (strain HI4320).